Reading from the N-terminus, the 59-residue chain is Potassium channel toxin alpha-KTx 16.4 (59 aa).

The N-terminal stretch at M1–A22 is a signal peptide. Intrachain disulfides connect C30–C51, C36–C56, and C40–C58.

The protein belongs to the short scorpion toxin superfamily. Potassium channel inhibitor family. Alpha-KTx 16 subfamily. As to expression, expressed by the venom gland.

The protein resides in the secreted. Its function is as follows. Weak inhibitor of voltage-gated potassium channel hKv1.3/KCNA3. The chain is Potassium channel toxin alpha-KTx 16.4 from Mesobuthus eupeus (Lesser Asian scorpion).